A 240-amino-acid polypeptide reads, in one-letter code: Uridylate kinase (240 aa).

ATP is bound at residue 12 to 15 (KLSG). Residues 20-25 (GKQGFG) form an involved in allosteric activation by GTP region. Residue Gly-54 participates in UMP binding. ATP contacts are provided by Gly-55 and Arg-59. UMP-binding positions include Asp-74 and 135–142 (TGNPYFST). ATP contacts are provided by Asn-163, Tyr-169, and Asp-172.

This sequence belongs to the UMP kinase family. Homohexamer.

The protein resides in the cytoplasm. The catalysed reaction is UMP + ATP = UDP + ADP. It participates in pyrimidine metabolism; CTP biosynthesis via de novo pathway; UDP from UMP (UMPK route): step 1/1. Allosterically activated by GTP. Inhibited by UTP. Its function is as follows. Catalyzes the reversible phosphorylation of UMP to UDP. The sequence is that of Uridylate kinase from Geobacillus thermodenitrificans (strain NG80-2).